Consider the following 486-residue polypeptide: Cardiolipin synthase A (486 aa).

2 helical membrane passes run 3–23 and 38–58; these read TVYT…IAGV and MAWL…YLAV. 2 consecutive PLD phosphodiesterase domains span residues 219 to 246 and 399 to 426; these read MDLR…VDPR and EGGL…DMRS. Residues His224, Lys226, Asp231, His404, Lys406, and Asp411 contribute to the active site.

This sequence belongs to the phospholipase D family. Cardiolipin synthase subfamily. ClsA sub-subfamily.

It localises to the cell inner membrane. It carries out the reaction 2 a 1,2-diacyl-sn-glycero-3-phospho-(1'-sn-glycerol) = a cardiolipin + glycerol. Catalyzes the reversible phosphatidyl group transfer from one phosphatidylglycerol molecule to another to form cardiolipin (CL) (diphosphatidylglycerol) and glycerol. This chain is Cardiolipin synthase A, found in Shigella dysenteriae serotype 1 (strain Sd197).